We begin with the raw amino-acid sequence, 88 residues long: Large ribosomal subunit protein bL27 (88 aa).

Residues 1 to 24 (MATKKSGGSSGNGRDSRGRRLGVK) are disordered.

Belongs to the bacterial ribosomal protein bL27 family.

The polypeptide is Large ribosomal subunit protein bL27 (Ehrlichia chaffeensis (strain ATCC CRL-10679 / Arkansas)).